Here is a 337-residue protein sequence, read N- to C-terminus: Tryptophan--tRNA ligase (337 aa).

Residues 9–11 (RPT) and 17–18 (GH) each bind ATP. The 'HIGH' region signature appears at 10–18 (PTGRLHLGH). Aspartate 137 provides a ligand contact to L-tryptophan. ATP-binding positions include 149–151 (GKD), leucine 187, and 195–199 (KMSKS). Positions 195-199 (KMSKS) match the 'KMSKS' region motif.

Belongs to the class-I aminoacyl-tRNA synthetase family. Homodimer.

Its subcellular location is the cytoplasm. It catalyses the reaction tRNA(Trp) + L-tryptophan + ATP = L-tryptophyl-tRNA(Trp) + AMP + diphosphate + H(+). Its function is as follows. Catalyzes the attachment of tryptophan to tRNA(Trp). In Treponema pallidum (strain Nichols), this protein is Tryptophan--tRNA ligase.